Reading from the N-terminus, the 426-residue chain is MSKSENLYSAARELIPGGVNSPVRAFTGVGGTPLFIEKADGAYLYDVDGKAYIDYVGSWGPMVLGHNHPAIRNAVIEAAERGLSFGAPTEMEVKMAQLVTELVPTMDMVRMVNSGTEATMSAIRLARGFTGRDKIIKFEGCYHGHADCLLVKAGSGALTLGQPNSPGVPADFAKHTLTCTYNDLASVRAAFEQYPQEIACIIVEPVAGNMNCVPPLPEFLPGLRALCDEFGALLIIDEVMTGFRVALAGAQDYYGVEPDLTCLGKIIGGGMPVGAFGGRRDVMDALAPTGPVYQAGTLSGNPIAMAAGFACLNEVAQPGVHETLDELTTRLAEGLREAAEEAGIPLVVNHVGGMFGIFFTDAESVTCYQDVMACDVERFKRFFHMMLDEGVYLAPSAFEADFMSVAHSMEDINNTIDAARRVFAKL.

Lys265 is modified (N6-(pyridoxal phosphate)lysine).

The protein belongs to the class-III pyridoxal-phosphate-dependent aminotransferase family. HemL subfamily. Homodimer. The cofactor is pyridoxal 5'-phosphate.

The protein resides in the cytoplasm. It carries out the reaction (S)-4-amino-5-oxopentanoate = 5-aminolevulinate. It functions in the pathway porphyrin-containing compound metabolism; protoporphyrin-IX biosynthesis; 5-aminolevulinate from L-glutamyl-tRNA(Glu): step 2/2. The protein is Glutamate-1-semialdehyde 2,1-aminomutase of Escherichia coli O81 (strain ED1a).